Consider the following 159-residue polypeptide: MVGRLTHVDEKGVKMVEIGHKDVVFRKAIAKGRIRLRPETIKLIREGKIEKGNVLATAQIAGILAVKKTPELIPLCHPIPLTGVDITFEFGEDYIEATCEVRAYYKTGVEMEALTGVTVALLTIWDMVKAVEKDEHGQYPYTRIEDVRVVEKIKTYSTQ.

Substrate-binding positions include 75 to 77 (LCH) and 111 to 112 (ME). Asp-126 is a catalytic residue.

The protein belongs to the MoaC family. In terms of assembly, homohexamer; trimer of dimers.

The enzyme catalyses (8S)-3',8-cyclo-7,8-dihydroguanosine 5'-triphosphate = cyclic pyranopterin phosphate + diphosphate. Its pathway is cofactor biosynthesis; molybdopterin biosynthesis. Its function is as follows. Catalyzes the conversion of (8S)-3',8-cyclo-7,8-dihydroguanosine 5'-triphosphate to cyclic pyranopterin monophosphate (cPMP). This Pyrococcus abyssi (strain GE5 / Orsay) protein is Probable cyclic pyranopterin monophosphate synthase.